A 161-amino-acid chain; its full sequence is 2-C-methyl-D-erythritol 2,4-cyclodiphosphate synthase (161 aa).

Positions 9 and 11 each coordinate a divalent metal cation. Residues 9–11 (DFH) and 37–38 (HS) each bind 4-CDP-2-C-methyl-D-erythritol 2-phosphate. Residue His-45 participates in a divalent metal cation binding. 4-CDP-2-C-methyl-D-erythritol 2-phosphate-binding positions include 59-61 (DIG), 64-68 (FPDTD), 135-138 (TTTE), and Arg-145.

This sequence belongs to the IspF family. Homotrimer. Requires a divalent metal cation as cofactor.

It carries out the reaction 4-CDP-2-C-methyl-D-erythritol 2-phosphate = 2-C-methyl-D-erythritol 2,4-cyclic diphosphate + CMP. It functions in the pathway isoprenoid biosynthesis; isopentenyl diphosphate biosynthesis via DXP pathway; isopentenyl diphosphate from 1-deoxy-D-xylulose 5-phosphate: step 4/6. Its function is as follows. Involved in the biosynthesis of isopentenyl diphosphate (IPP) and dimethylallyl diphosphate (DMAPP), two major building blocks of isoprenoid compounds. Catalyzes the conversion of 4-diphosphocytidyl-2-C-methyl-D-erythritol 2-phosphate (CDP-ME2P) to 2-C-methyl-D-erythritol 2,4-cyclodiphosphate (ME-CPP) with a corresponding release of cytidine 5-monophosphate (CMP). The chain is 2-C-methyl-D-erythritol 2,4-cyclodiphosphate synthase from Leptospira interrogans serogroup Icterohaemorrhagiae serovar Lai (strain 56601).